A 269-amino-acid polypeptide reads, in one-letter code: Putative pyruvate, phosphate dikinase regulatory protein (269 aa).

An ADP-binding site is contributed by 147 to 154; it reads GLSRTSKT.

The protein belongs to the pyruvate, phosphate/water dikinase regulatory protein family. PDRP subfamily.

The catalysed reaction is N(tele)-phospho-L-histidyl/L-threonyl-[pyruvate, phosphate dikinase] + ADP = N(tele)-phospho-L-histidyl/O-phospho-L-threonyl-[pyruvate, phosphate dikinase] + AMP + H(+). It catalyses the reaction N(tele)-phospho-L-histidyl/O-phospho-L-threonyl-[pyruvate, phosphate dikinase] + phosphate + H(+) = N(tele)-phospho-L-histidyl/L-threonyl-[pyruvate, phosphate dikinase] + diphosphate. Its function is as follows. Bifunctional serine/threonine kinase and phosphorylase involved in the regulation of the pyruvate, phosphate dikinase (PPDK) by catalyzing its phosphorylation/dephosphorylation. The sequence is that of Putative pyruvate, phosphate dikinase regulatory protein from Clostridium botulinum (strain ATCC 19397 / Type A).